Here is an 878-residue protein sequence, read N- to C-terminus: Probable outer membrane protein PmpI (878 aa).

The signal sequence occupies residues 1–24 (MRPDHMNFCCLCAAILSSTAVLFG). Low complexity predominate over residues 360-371 (SSKESPLPSSLQ). Residues 360–381 (SSKESPLPSSLQASVTSPTPAT) form a disordered region. The segment covering 372–381 (ASVTSPTPAT) has biased composition (polar residues). The 277-residue stretch at 602–878 (GGAYLFGTWG…SLDLGTTYRF (277 aa)) folds into the Autotransporter domain.

Belongs to the PMP outer membrane protein family.

Its subcellular location is the secreted. It is found in the cell wall. The protein localises to the cell outer membrane. The sequence is that of Probable outer membrane protein PmpI (pmpI) from Chlamydia trachomatis serovar D (strain ATCC VR-885 / DSM 19411 / UW-3/Cx).